A 265-amino-acid chain; its full sequence is Glutamate racemase (265 aa).

Residues 12 to 13 (DS) and 44 to 45 (YG) contribute to the substrate site. C75 (proton donor/acceptor) is an active-site residue. Residue 76 to 77 (NT) coordinates substrate. Catalysis depends on C186, which acts as the Proton donor/acceptor. 187 to 188 (TH) serves as a coordination point for substrate.

Belongs to the aspartate/glutamate racemases family.

The enzyme catalyses L-glutamate = D-glutamate. Its pathway is cell wall biogenesis; peptidoglycan biosynthesis. In terms of biological role, provides the (R)-glutamate required for cell wall biosynthesis. This Pseudomonas entomophila (strain L48) protein is Glutamate racemase.